The primary structure comprises 208 residues: Small ribosomal subunit protein uS4 (208 aa).

The S4 RNA-binding domain maps to 98 to 161 (RRLDNVIYRM…KELEIIKESL (64 aa)).

It belongs to the universal ribosomal protein uS4 family. Part of the 30S ribosomal subunit. Contacts protein S5. The interaction surface between S4 and S5 is involved in control of translational fidelity.

One of the primary rRNA binding proteins, it binds directly to 16S rRNA where it nucleates assembly of the body of the 30S subunit. Its function is as follows. With S5 and S12 plays an important role in translational accuracy. In Thermodesulfovibrio yellowstonii (strain ATCC 51303 / DSM 11347 / YP87), this protein is Small ribosomal subunit protein uS4.